Reading from the N-terminus, the 233-residue chain is Transcriptional regulatory protein NatR (233 aa).

The Response regulatory domain maps to 3–117 (KVGLVDDYRV…RLAASFDRYL (115 aa)). A 4-aspartylphosphate modification is found at Asp54. One can recognise an HTH LytTR-type domain in the interval 129-233 (ILIKQKSEMH…QLDYFQNYYF (105 aa)).

In terms of processing, phosphorylated by NatK.

Its subcellular location is the cytoplasm. Functionally, member of the two-component regulatory system NatK/NatR that positively regulates the expression of the natAB operon. Acts by binding directly to the promoter of natAB. The protein is Transcriptional regulatory protein NatR of Bacillus subtilis (strain 168).